The chain runs to 778 residues: Probable cation-transporting ATPase exp7 (778 aa).

Residues 1-37 are Cytoplasmic-facing; sequence MDKNKIMGLTQREVKERQAEGLVNDFTASASTSTWQI. The chain crosses the membrane as a helical span at residues 38–57; the sequence is VKRNVFTLFNALNFAIALAL. Over 58–64 the chain is Extracellular; the sequence is AFVQAWS. Residues 65–84 form a helical membrane-spanning segment; that stretch reads NLVFFAVICFNAFSGIVTEL. Residues 85-209 are Cytoplasmic-facing; sequence RAKHMVDKLN…PINSRIMKSL (125 aa). A helical transmembrane segment spans residues 210 to 229; the sequence is DKLAGFTGKIIIPFGLALLL. Topologically, residues 230 to 242 are extracellular; it reads EALLLKGLPLKSS. Residues 243 to 260 form a helical membrane-spanning segment; that stretch reads VVNSSTALLGMLPKGIAL. Over 261-586 the chain is Cytoplasmic; it reads LTITSLLTAV…FEGRRVVNNI (326 aa). Asp298 functions as the 4-aspartylphosphate intermediate in the catalytic mechanism. Positions 532 and 536 each coordinate Mg(2+). The chain crosses the membrane as a helical span at residues 587–606; sequence AHIAPIFLIKTIYSFLLAVI. Residues 607–624 are Extracellular-facing; it reads CIASALLGRSEWILIFPF. Residues 625-645 form a helical membrane-spanning segment; that stretch reads IPIQITMIDQFVEGFPPFVLT. Topologically, residues 646–663 are cytoplasmic; sequence FERNIKPVEQNFLRKSML. Residues 664–684 form a helical membrane-spanning segment; it reads RALPSALMVVFSVLFVKMFGA. Residues 685-689 are Extracellular-facing; sequence SQGWS. A helical membrane pass occupies residues 690-708; that stretch reads ELEISTLLYYLLGSIGFLS. At 709 to 716 the chain is on the cytoplasmic side; the sequence is VFRACMPF. Residues 717–739 traverse the membrane as a helical segment; that stretch reads TLWRVLLIVWSVGGFLATALFPR. The Extracellular portion of the chain corresponds to 740 to 757; sequence IQKLLEISTLTEQTLPVY. Residues 758–777 traverse the membrane as a helical segment; sequence GVMMLVFTVIFILTSRYQAK. A topological domain (cytoplasmic) is located at residue Lys778.

The protein belongs to the cation transport ATPase (P-type) (TC 3.A.3) family.

It localises to the cell membrane. It carries out the reaction ATP + H2O = ADP + phosphate + H(+). The protein is Probable cation-transporting ATPase exp7 (exp7) of Streptococcus pneumoniae serotype 4 (strain ATCC BAA-334 / TIGR4).